A 1430-amino-acid chain; its full sequence is rRNA biogenesis protein RRP5 (1430 aa).

6 consecutive S1 motif domains span residues Asp-74–Lys-160, Gly-176–Val-238, Gly-261–Asn-329, Gly-447–Arg-511, Gly-531–Pro-592, and Gln-697–Lys-771. Residues Lys-1041–Lys-1145 are disordered. Positions Thr-1043–Thr-1053 are enriched in polar residues. Composition is skewed to basic and acidic residues over residues Val-1057–Thr-1082 and Ser-1135–Lys-1145. Residues Leu-1119–Asn-1157 are a coiled coil. 6 HAT repeats span residues Lys-1161–Ser-1193, Thr-1195–Val-1232, Lys-1265–Trp-1297, Gly-1299–Lys-1333, Asp-1335–Lys-1367, and Gly-1369–Asn-1404.

Its subcellular location is the nucleus. The protein resides in the nucleolus. Its function is as follows. Involved in rRNA processing or maturation during ribosome biogenesis. The protein is rRNA biogenesis protein RRP5 of Drosophila melanogaster (Fruit fly).